The following is a 396-amino-acid chain: Purine ribonucleoside efflux pump NepI (396 aa).

Residues 1-21 (MSEFIAENRGADAITRPNWSA) lie on the Cytoplasmic side of the membrane. The helical transmembrane segment at 22–42 (VFSVAFCVACLIIVEFLPVSL) threads the bilayer. The Periplasmic segment spans residues 43 to 54 (LTPMAQDLGISE). A helical transmembrane segment spans residues 55 to 75 (GVAGQSVTVTAFVAMFASLFI). The Cytoplasmic segment spans residues 76–85 (TQTIQATDRR). The chain crosses the membrane as a helical span at residues 86-106 (YVVILFAVLLTLSCLLVSFAN). Position 107 (serine 107) is a topological domain, periplasmic. The helical transmembrane segment at 108 to 128 (FSLLLIGRACLGLALGGFWAM) threads the bilayer. Residues 129–147 (SASLTMRLVPPRTVPKALS) lie on the Cytoplasmic side of the membrane. Residues 148–168 (VIFGAVSIALVIAAPLGSFLG) form a helical membrane-spanning segment. The Periplasmic portion of the chain corresponds to 169–175 (ELIGWRN). The helical transmembrane segment at 176–196 (VFNAAAAMGVLCIFWIIKSLP) threads the bilayer. The Cytoplasmic portion of the chain corresponds to 197 to 215 (SLPGEPSHQKQNTFRLLQR). The helical transmembrane segment at 216-236 (PGVMAGMIAIFMSFAGQFAFF) threads the bilayer. The Periplasmic portion of the chain corresponds to 237 to 255 (TYIRPVYMNLAGFGVDGLT). The helical transmembrane segment at 256 to 276 (LVLLSFGIASFVGTSLSSFIL) threads the bilayer. Over 277-281 (KRSVK) the chain is Cytoplasmic. The chain crosses the membrane as a helical span at residues 282-302 (LALAGAPFVLALSALVLTLWG). Residues 303–305 (SDK) lie on the Periplasmic side of the membrane. A helical transmembrane segment spans residues 306 to 326 (IVATGVAIIWGLTFALIPVGW). At 327–343 (STWITRSLADQAEKAGS) the chain is on the cytoplasmic side. The chain crosses the membrane as a helical span at residues 344–364 (IQVAVIQLANTCGAAIGGYAL). The Periplasmic segment spans residues 365 to 366 (DN). Residues 367–387 (IGLTSPLMLSGTLMLLTALLV) traverse the membrane as a helical segment. Residues 388-396 (TAKVKMKKS) are Cytoplasmic-facing.

Belongs to the major facilitator superfamily. DHA1 family. NepI (TC 2.A.1.2.26) subfamily.

The protein resides in the cell inner membrane. It carries out the reaction inosine(in) + H(+)(out) = inosine(out) + H(+)(in). The enzyme catalyses guanosine(in) + H(+)(out) = guanosine(out) + H(+)(in). Functionally, involved in the efflux of purine ribonucleosides, such as inosine and guanosine. This is Purine ribonucleoside efflux pump NepI from Escherichia coli O1:K1 / APEC.